Consider the following 79-residue polypeptide: Protein RALF-like 15 (79 aa).

Residues 1–28 (MGMSKSIKVIVSLALILFLALAATKVEA) form the signal peptide. 2 disulfide bridges follow: C46-C54 and C66-C72.

Belongs to the plant rapid alkalinization factor (RALF) family.

The protein localises to the secreted. In terms of biological role, cell signaling peptide that may regulate plant stress, growth, and development. Mediates a rapid alkalinization of extracellular space by mediating a transient increase in the cytoplasmic Ca(2+) concentration leading to a calcium-dependent signaling events through a cell surface receptor and a concomitant activation of some intracellular mitogen-activated protein kinases. The protein is Protein RALF-like 15 (RALFL15) of Arabidopsis thaliana (Mouse-ear cress).